Reading from the N-terminus, the 1641-residue chain is Alpha-2-macroglobulin (1641 aa).

The signal sequence occupies residues M1–G31. A lipid anchor (N-palmitoyl cysteine) is attached at C32. C32 is lipidated: S-diacylglycerol cysteine. Residues C1166–Q1169 constitute a cross-link (isoglutamyl cysteine thioester (Cys-Gln)).

Belongs to the protease inhibitor I39 (alpha-2-macroglobulin) family. Bacterial alpha-2-macroglobulin subfamily.

The protein localises to the cell membrane. Functionally, protects the bacterial cell from host peptidases. The chain is Alpha-2-macroglobulin from Xylella fastidiosa (strain 9a5c).